We begin with the raw amino-acid sequence, 102 residues long: RNA-binding protein Hfq (102 aa).

The region spanning 9–68 is the Sm domain; that stretch reads DPFVNALRRERVPVSIYLVNGIKLQGQIESFDQFVILLKNTVSQMVYKHAISTVVPSRPV. Residues 63 to 102 form a disordered region; sequence VPSRPVSHHSNNAGGGASNNYHHGSNAQGSTAQQDSEETE. The span at 70 to 88 shows a compositional bias: low complexity; sequence HHSNNAGGGASNNYHHGSN.

It belongs to the Hfq family. Homohexamer.

Its function is as follows. RNA chaperone that binds small regulatory RNA (sRNAs) and mRNAs to facilitate mRNA translational regulation in response to envelope stress, environmental stress and changes in metabolite concentrations. Also binds with high specificity to tRNAs. This chain is RNA-binding protein Hfq, found in Salmonella heidelberg (strain SL476).